The sequence spans 474 residues: Gamma-aminobutyric acid receptor subunit beta-1 (474 aa).

The N-terminal stretch at 1-25 (MWTVQNRESLGLLSFPVMITMVCCA) is a signal peptide. Residues 26–245 (HSTNEPSNMS…SFRLKRNIGY (220 aa)) are Extracellular-facing. N-linked (GlcNAc...) asparagine glycosylation occurs at Asn105. A histamine-binding site is contributed by Tyr122. An intrachain disulfide couples Cys161 to Cys175. A glycan (N-linked (GlcNAc...) asparagine) is linked at Asn174. Histamine contacts are provided by residues 181–182 (SY) and Thr227. 4-aminobutanoate-binding residues include Tyr182 and Thr227. Transmembrane regions (helical) follow at residues 246 to 267 (FILQ…SFWI), 271 to 293 (ASAA…STHL), and 305 to 327 (AIDI…YAFV). The Cytoplasmic portion of the chain corresponds to 328–451 (NYIFFGKGPQ…DLTDVNSIDK (124 aa)). Residues 452-473 (WSRMFFPITFSLFNVVYWLYYV) traverse the membrane as a helical segment.

This sequence belongs to the ligand-gated ion channel (TC 1.A.9) family. Gamma-aminobutyric acid receptor (TC 1.A.9.5) subfamily. GABRB1 sub-subfamily. Heteropentamer, formed by a combination of alpha (GABRA1-6), beta (GABRB1-3), gamma (GABRG1-3), delta (GABRD), epsilon (GABRE), rho (GABRR1-3), pi (GABRP) and theta (GABRQ) chains, each subunit exhibiting distinct physiological and pharmacological properties. Binds UBQLN1.

It localises to the postsynaptic cell membrane. Its subcellular location is the cell membrane. It carries out the reaction chloride(in) = chloride(out). Its activity is regulated as follows. Potentiated by etomidate, propofol, pregnanolone and flurazepam. Potentiated by histamine. In terms of biological role, beta subunit of the heteropentameric ligand-gated chloride channel gated by gamma-aminobutyric acid (GABA), a major inhibitory neurotransmitter in the brain. GABA-gated chloride channels, also named GABA(A) receptors (GABAAR), consist of five subunits arranged around a central pore and contain one or two GABA active binding sites located at the alpha and beta subunit interfaces, depending on subunit composition. When activated by GABA, GABAARs selectively allow the flow of chloride anions across the cell membrane down their electrochemical gradient. Chloride influx into the postsynaptic neuron following GABAAR opening decreases the neuron ability to generate a new action potential, thereby reducing nerve transmission. Beta-containing GABAARs can simultaneously bind GABA and histamine where histamine binds at the interface of two neighboring beta subunits, which may be involved in the regulation of sleep and wakefulness. The protein is Gamma-aminobutyric acid receptor subunit beta-1 of Homo sapiens (Human).